Consider the following 176-residue polypeptide: Ribosome maturation factor RimM (176 aa).

Residues 97 to 176 (EDDFYWRDLI…QICVDWDPGF (80 aa)) enclose the PRC barrel domain.

This sequence belongs to the RimM family. Binds ribosomal protein uS19.

Its subcellular location is the cytoplasm. Its function is as follows. An accessory protein needed during the final step in the assembly of 30S ribosomal subunit, possibly for assembly of the head region. Essential for efficient processing of 16S rRNA. May be needed both before and after RbfA during the maturation of 16S rRNA. It has affinity for free ribosomal 30S subunits but not for 70S ribosomes. The protein is Ribosome maturation factor RimM of Colwellia psychrerythraea (strain 34H / ATCC BAA-681) (Vibrio psychroerythus).